Here is a 290-residue protein sequence, read N- to C-terminus: uncharacterized protein (290 aa).

The active-site Schiff-base intermediate with substrate is Lys-203.

This sequence belongs to the DeoC/FbaB aldolase family.

This is an uncharacterized protein from Pasteurella multocida (strain Pm70).